A 137-amino-acid chain; its full sequence is MAFDFGERRIGVAVGDTILGIPHPLATIDTAVTDERFAAIARLIEEWQPRQLVVGLPMHPDGEEHELSALSRRFANRLKGRFGLPVWLVDERYTSVIAEQLLEEAGVKKGRKQKPALDQVAAQAILAGWFEQPGTAV.

The protein belongs to the YqgF nuclease family.

Its subcellular location is the cytoplasm. Its function is as follows. Could be a nuclease involved in processing of the 5'-end of pre-16S rRNA. The chain is Putative pre-16S rRNA nuclease from Chromobacterium violaceum (strain ATCC 12472 / DSM 30191 / JCM 1249 / CCUG 213 / NBRC 12614 / NCIMB 9131 / NCTC 9757 / MK).